A 132-amino-acid chain; its full sequence is UPF0047 protein YugU (132 aa).

This sequence belongs to the UPF0047 family.

The protein is UPF0047 protein YugU (yugU) of Bacillus subtilis (strain 168).